A 296-amino-acid polypeptide reads, in one-letter code: Nucleotide-binding protein SGO_0954 (296 aa).

Residue 13–20 coordinates ATP; sequence GMSGAGKT. 63 to 66 contacts GTP; the sequence is DMRS.

The protein belongs to the RapZ-like family.

Functionally, displays ATPase and GTPase activities. The chain is Nucleotide-binding protein SGO_0954 from Streptococcus gordonii (strain Challis / ATCC 35105 / BCRC 15272 / CH1 / DL1 / V288).